The sequence spans 520 residues: Developmental regulatory protein wetA (520 aa).

Polar residues-rich tracts occupy residues 109–118 (TATHALSISP), 155–165 (QSFSPSLMRSS), and 378–392 (SSQK…SQVH). Disordered regions lie at residues 109–165 (TATH…MRSS), 378–454 (SSQK…SNKS), and 468–496 (KKIL…RRRK). Residues 420-429 (PTHRRTHSRK) are compositionally biased toward basic residues. Low complexity predominate over residues 445 to 454 (SSSSRGSNKS).

The protein belongs to the wetA family.

Functionally, brlA, abaA and wetA are pivotal regulators of conidiophore development and conidium maturation. They act individually and together to regulate their own expression and that of numerous other sporulation-specific genes. The sequence is that of Developmental regulatory protein wetA from Penicillium roqueforti (strain FM164).